A 443-amino-acid chain; its full sequence is Glutamate--tRNA ligase 1 (443 aa).

A 'HIGH' region motif is present at residues 7–17 (PSPTGYLHVGN). A 'KMSKS' region motif is present at residues 236–240 (KISKR). ATP is bound at residue Lys239.

The protein belongs to the class-I aminoacyl-tRNA synthetase family. Glutamate--tRNA ligase type 1 subfamily. In terms of assembly, monomer.

Its subcellular location is the cytoplasm. It carries out the reaction tRNA(Glu) + L-glutamate + ATP = L-glutamyl-tRNA(Glu) + AMP + diphosphate. In terms of biological role, catalyzes the attachment of glutamate to tRNA(Glu) in a two-step reaction: glutamate is first activated by ATP to form Glu-AMP and then transferred to the acceptor end of tRNA(Glu). This chain is Glutamate--tRNA ligase 1, found in Ehrlichia chaffeensis (strain ATCC CRL-10679 / Arkansas).